The following is a 260-amino-acid chain: Putative serine protease 45 (260 aa).

One can recognise a Peptidase S1 domain in the interval 1–234 (MTRHWPWEVS…YTKWIKKQMS (234 aa)). A disulfide bridge connects residues cysteine 19 and cysteine 35. The Charge relay system role is filled by histidine 34. An N-linked (GlcNAc...) asparagine glycan is attached at asparagine 55. The active-site Charge relay system is aspartate 82. 3 disulfides stabilise this stretch: cysteine 116–cysteine 192, cysteine 151–cysteine 173, and cysteine 182–cysteine 210. The active-site Charge relay system is serine 186.

This sequence belongs to the peptidase S1 family.

In Homo sapiens (Human), this protein is Putative serine protease 45.